A 78-amino-acid chain; its full sequence is Surfactant-associated protein 2 (78 aa).

An N-terminal signal peptide occupies residues 1–19 (MGAGLPLVLLLTLVGSSQG). An N-linked (GlcNAc...) asparagine glycan is attached at Asn-37.

N-glycosylated.

Its subcellular location is the secreted. It localises to the cytoplasmic vesicle. The protein localises to the secretory vesicle. It is found in the golgi apparatus. Its function is as follows. Putative surfactant protein. The sequence is that of Surfactant-associated protein 2 (SFTA2) from Bos taurus (Bovine).